The primary structure comprises 308 residues: Eukaryotic translation initiation factor 3 subunit G-B (308 aa).

Disordered stretches follow at residues 1–35 (MPTG…KQDP) and 176–227 (STAD…DDNA). The span at 185–194 (GAEPEPAQAP) shows a compositional bias: low complexity. Residues 209–227 (GGSRRGESMQPNRRADDNA) are compositionally biased toward basic and acidic residues. One can recognise an RRM domain in the interval 227 to 305 (ATIRVTNLSE…LILNVEWAKP (79 aa)).

Belongs to the eIF-3 subunit G family. In terms of assembly, component of the eukaryotic translation initiation factor 3 (eIF-3) complex, which is composed of 13 subunits: eif3a, eif3b, eif3c, eif3d, eif3e, eif3f, eif3g, eif3h, eif3i, eif3j, eif3k, eif3l and eif3m.

It is found in the cytoplasm. RNA-binding component of the eukaryotic translation initiation factor 3 (eIF-3) complex, which is involved in protein synthesis of a specialized repertoire of mRNAs and, together with other initiation factors, stimulates binding of mRNA and methionyl-tRNAi to the 40S ribosome. The eIF-3 complex specifically targets and initiates translation of a subset of mRNAs involved in cell proliferation. This subunit can bind 18S rRNA. The protein is Eukaryotic translation initiation factor 3 subunit G-B (eif3g-b) of Xenopus laevis (African clawed frog).